Reading from the N-terminus, the 248-residue chain is Orotidine 5'-phosphate decarboxylase (248 aa).

Residues D22, K44, D71–T80, T131, R192, Q201, G221, and R222 contribute to the substrate site. K73 serves as the catalytic Proton donor.

The protein belongs to the OMP decarboxylase family. Type 1 subfamily. In terms of assembly, homodimer.

The catalysed reaction is orotidine 5'-phosphate + H(+) = UMP + CO2. Its pathway is pyrimidine metabolism; UMP biosynthesis via de novo pathway; UMP from orotate: step 2/2. Functionally, catalyzes the decarboxylation of orotidine 5'-monophosphate (OMP) to uridine 5'-monophosphate (UMP). The sequence is that of Orotidine 5'-phosphate decarboxylase from Photorhabdus laumondii subsp. laumondii (strain DSM 15139 / CIP 105565 / TT01) (Photorhabdus luminescens subsp. laumondii).